Here is a 534-residue protein sequence, read N- to C-terminus: High affinity cGMP-specific 3',5'-cyclic phosphodiesterase 9A (534 aa).

The region spanning 175–496 (PRRDVPTYPK…EHYEELKQLD (322 aa)) is the PDEase domain. Histidine 251 functions as the Proton donor in the catalytic mechanism. A 3',5'-cyclic GMP-binding site is contributed by 251–255 (HNFRH). The Zn(2+) site is built by histidine 255, histidine 291, and aspartate 292. A 3',5'-cyclic GMP-binding site is contributed by aspartate 292. A Mg(2+)-binding site is contributed by aspartate 292. Serine 318 bears the Phosphoserine mark. Residues aspartate 401, tyrosine 423, and 451–452 (AQ) contribute to the 3',5'-cyclic GMP site. Residue aspartate 401 participates in Zn(2+) binding. The segment at 500–534 (KELQKKTESLTSGAPENTTEKNRDAKDSEGHSPPN) is disordered. Over residues 517-534 (TTEKNRDAKDSEGHSPPN) the composition is skewed to basic and acidic residues.

It belongs to the cyclic nucleotide phosphodiesterase family. PDE9 subfamily. Homodimer. The cofactor is Zn(2+). Mg(2+) serves as cofactor. In terms of tissue distribution, highly expressed in kidney. Lower levels in liver, lung and brain. Widely expressed in brain, with highest expression in cerebellar Purkinje cells. Present in heart (at protein level).

It localises to the cell projection. The protein localises to the ruffle membrane. It is found in the cytoplasm. Its subcellular location is the perinuclear region. The protein resides in the golgi apparatus. It localises to the endoplasmic reticulum. The protein localises to the cell membrane. It is found in the sarcolemma. It catalyses the reaction 3',5'-cyclic GMP + H2O = GMP + H(+). It functions in the pathway purine metabolism; 3',5'-cyclic GMP degradation; GMP from 3',5'-cyclic GMP: step 1/1. Its activity is regulated as follows. Inhibited by SCH 51866 and moderately, by zaprinast. Specifically inhibited by PF-04447943 (6-[(3S,4S)-4-methyl-1-(pyrimidin-2-ylmethyl)pyrrolidin-3-yl]-1-(tetrahydro-2H-pyran-4-yl)-1,5-dihydro-4H-pyrazolo[3,4-d]pyrimidin-4-one). Specifically hydrolyzes the second messenger cGMP, which is a key regulator of many important physiological processes. Highly specific: compared to other members of the cyclic nucleotide phosphodiesterase family, has the highest affinity and selectivity for cGMP. Specifically regulates natriuretic-peptide-dependent cGMP signaling in heart, acting as a regulator of cardiac hypertrophy in myocytes and muscle. Does not regulate nitric oxide-dependent cGMP in heart. Additional experiments are required to confirm whether its ability to hydrolyze natriuretic-peptide-dependent cGMP is specific to heart or is a general feature of the protein. In brain, involved in cognitive function, such as learning and long-term memory. The sequence is that of High affinity cGMP-specific 3',5'-cyclic phosphodiesterase 9A (Pde9a) from Mus musculus (Mouse).